Reading from the N-terminus, the 94-residue chain is Co-chaperonin GroES (94 aa).

This sequence belongs to the GroES chaperonin family. As to quaternary structure, heptamer of 7 subunits arranged in a ring. Interacts with the chaperonin GroEL.

It localises to the cytoplasm. Together with the chaperonin GroEL, plays an essential role in assisting protein folding. The GroEL-GroES system forms a nano-cage that allows encapsulation of the non-native substrate proteins and provides a physical environment optimized to promote and accelerate protein folding. GroES binds to the apical surface of the GroEL ring, thereby capping the opening of the GroEL channel. The polypeptide is Co-chaperonin GroES (Streptococcus pneumoniae (strain Taiwan19F-14)).